The chain runs to 353 residues: Photosystem II D2 protein (353 aa).

Threonine 2 carries the N-acetylthreonine modification. Threonine 2 is subject to Phosphothreonine. Residues 41–61 form a helical membrane-spanning segment; sequence CAYFALGGWFTGTTFVTSWYT. Residue histidine 118 participates in chlorophyll a binding. The chain crosses the membrane as a helical span at residues 125 to 141; the sequence is GFMLRQFELARSVQLRP. The pheophytin a site is built by glutamine 130 and asparagine 143. A helical membrane pass occupies residues 153–166; it reads VFVSVFLIYPLGQS. Residue histidine 198 participates in chlorophyll a binding. The helical transmembrane segment at 208-228 threads the bilayer; the sequence is AALLCAIHGATVENTLFEDGD. Residues histidine 215 and phenylalanine 262 each contribute to the a plastoquinone site. Histidine 215 is a Fe cation binding site. Histidine 269 provides a ligand contact to Fe cation. A helical transmembrane segment spans residues 279–295; it reads GLWMSAIGVVGLALNLR.

It belongs to the reaction center PufL/M/PsbA/D family. PSII is composed of 1 copy each of membrane proteins PsbA, PsbB, PsbC, PsbD, PsbE, PsbF, PsbH, PsbI, PsbJ, PsbK, PsbL, PsbM, PsbT, PsbX, PsbY, PsbZ, Psb30/Ycf12, at least 3 peripheral proteins of the oxygen-evolving complex and a large number of cofactors. It forms dimeric complexes. Requires The D1/D2 heterodimer binds P680, chlorophylls that are the primary electron donor of PSII, and subsequent electron acceptors. It shares a non-heme iron and each subunit binds pheophytin, quinone, additional chlorophylls, carotenoids and lipids. There is also a Cl(-1) ion associated with D1 and D2, which is required for oxygen evolution. The PSII complex binds additional chlorophylls, carotenoids and specific lipids. as cofactor.

The protein resides in the plastid. Its subcellular location is the chloroplast thylakoid membrane. It carries out the reaction 2 a plastoquinone + 4 hnu + 2 H2O = 2 a plastoquinol + O2. Its function is as follows. Photosystem II (PSII) is a light-driven water:plastoquinone oxidoreductase that uses light energy to abstract electrons from H(2)O, generating O(2) and a proton gradient subsequently used for ATP formation. It consists of a core antenna complex that captures photons, and an electron transfer chain that converts photonic excitation into a charge separation. The D1/D2 (PsbA/PsbD) reaction center heterodimer binds P680, the primary electron donor of PSII as well as several subsequent electron acceptors. D2 is needed for assembly of a stable PSII complex. This is Photosystem II D2 protein from Oryza nivara (Indian wild rice).